The sequence spans 80 residues: Defensin-like protein CAL1 (80 aa).

The signal sequence occupies residues Met-1 to Ala-31. 4 cysteine pairs are disulfide-bonded: Cys-34–Cys-80, Cys-45–Cys-65, Cys-51–Cys-74, and Cys-55–Cys-76.

It belongs to the DEFL family. As to expression, expressed preferentially in root exodermis and xylem parenchyma cells in vasculature of root and flag leaf sheath.

Its subcellular location is the secreted. The protein resides in the extracellular space. Plant defensin-like protein involved in accumulation of cadmium (Cd) in rice leaves. Mediates Cd efflux from cytosol into extracellular spaces via chelation. This drives Cd secretion from xylem parenchyma cells into the xylem vessels, hence lowering Cd levels in cytosol meanwhile promoting Cd translocation from roots to shoots. In Oryza sativa subsp. japonica (Rice), this protein is Defensin-like protein CAL1.